The primary structure comprises 56 residues: uncharacterized protein (56 aa).

A helical membrane pass occupies residues 12-32; that stretch reads GITLFPYFAILILILAILVVG. The hydrophobic stretch occupies residues 19–31; sequence FAILILILAILVV.

It is found in the membrane. This is an uncharacterized protein from Chenopodium amaranticolor (Quinoa).